Consider the following 351-residue polypeptide: Methionine import ATP-binding protein MetN (351 aa).

The ABC transporter domain occupies Val4–Val249. ATP is bound at residue Gly41 to Ser48.

This sequence belongs to the ABC transporter superfamily. Methionine importer (TC 3.A.1.24) family. As to quaternary structure, the complex is composed of two ATP-binding proteins (MetN), two transmembrane proteins (MetI) and a solute-binding protein (MetQ).

It localises to the cell membrane. It catalyses the reaction L-methionine(out) + ATP + H2O = L-methionine(in) + ADP + phosphate + H(+). It carries out the reaction D-methionine(out) + ATP + H2O = D-methionine(in) + ADP + phosphate + H(+). Its function is as follows. Part of the ABC transporter complex MetNIQ involved in methionine import. Responsible for energy coupling to the transport system. The sequence is that of Methionine import ATP-binding protein MetN from Lactobacillus delbrueckii subsp. bulgaricus (strain ATCC 11842 / DSM 20081 / BCRC 10696 / JCM 1002 / NBRC 13953 / NCIMB 11778 / NCTC 12712 / WDCM 00102 / Lb 14).